The primary structure comprises 226 residues: Protein BASIC PENTACYSTEINE7 (226 aa).

Residues 42–116 (IDLSQEPPAE…PSIPETKREK (75 aa)) are disordered. Positions 66–76 (RDSRNDTETVK) are enriched in basic and acidic residues. Residues 88–105 (LKPKPQRKKRSVSNKSKK) show a composition bias toward basic residues.

This sequence belongs to the BBR/BPC family. As to expression, expressed in seedlings, leaves and pistils. Detected in anthers, in pollen grains, in young rosette, in leaf vasculature, in the lateral and primary roots, in embryo sac, and in the whole ovule.

The protein resides in the nucleus. Its function is as follows. Transcriptional regulator that specifically binds to GA-rich elements (GAGA-repeats) present in regulatory sequences of genes involved in developmental processes. The chain is Protein BASIC PENTACYSTEINE7 (BPC7) from Arabidopsis thaliana (Mouse-ear cress).